Consider the following 281-residue polypeptide: ATP synthase gamma chain (281 aa).

It belongs to the ATPase gamma chain family. In terms of assembly, F-type ATPases have 2 components, CF(1) - the catalytic core - and CF(0) - the membrane proton channel. CF(1) has five subunits: alpha(3), beta(3), gamma(1), delta(1), epsilon(1). CF(0) has three main subunits: a, b and c.

The protein resides in the cell inner membrane. In terms of biological role, produces ATP from ADP in the presence of a proton gradient across the membrane. The gamma chain is believed to be important in regulating ATPase activity and the flow of protons through the CF(0) complex. The chain is ATP synthase gamma chain from Ehrlichia canis (strain Jake).